We begin with the raw amino-acid sequence, 330 residues long: Trans-1,2-dihydrobenzene-1,2-diol dehydrogenase (330 aa).

The protein belongs to the Gfo/Idh/MocA family. As to quaternary structure, homodimer.

It catalyses the reaction (1R,2R)-1,2-dihydrobenzene-1,2-diol + NADP(+) = catechol + NADPH + H(+). The enzyme catalyses D-xylose + NADP(+) = D-xylono-1,5-lactone + NADPH + H(+). The protein is Trans-1,2-dihydrobenzene-1,2-diol dehydrogenase (dhdh) of Xenopus tropicalis (Western clawed frog).